The sequence spans 790 residues: Nuclear cap-binding protein subunit 1 (790 aa).

Residues 1–26 (MSRRRHSDENDGGQPHKRRKTSDANE) are disordered. A Nuclear localization signal motif is present at residues 3–20 (RRRHSDENDGGQPHKRRK). Ser7 is subject to Phosphoserine; by RPS6KB1. Thr21 bears the Phosphothreonine; by RPS6KB1 mark. Ser22 is modified (phosphoserine; by RPS6KB1). Residues 28 to 240 (EDHLESLICK…CLWAQIQKLK (213 aa)) enclose the MIF4G domain. The residue at position 201 (Ser201) is a Phosphoserine. An N6-acetyllysine modification is found at Lys204. The stretch at 643 to 713 (STIRKMNKHV…SEQKNLFLVI (71 aa)) forms a coiled coil. Residue Lys684 forms a Glycyl lysine isopeptide (Lys-Gly) (interchain with G-Cter in SUMO2) linkage. Residue Lys698 is modified to N6-acetyllysine.

This sequence belongs to the NCBP1 family. In terms of assembly, component of the nuclear cap-binding complex (CBC), a heterodimer composed of NCBP1/CBP80 and NCBP2/CBP20 that interacts with m7GpppG-capped RNA. Found in a U snRNA export complex containing PHAX/RNUXA, NCBP1/CBP80, NCBP2/CBP20, RAN, XPO1 and m7G-capped RNA. Identified in a IGF2BP1-dependent mRNP granule complex containing untranslated mRNAs. Interacts with PHAX/RNUXA, SRRT/ARS2, EIF4G2, IGF2BP1, HNRNPF, HNRNPH1, KIAA0427/CTIF, PARN, DROSHA, UPF1 and ALYREF/THOC4. May interact with EIF4G1; the interaction is however controversial since it is reported by PubMed:11340157, PubMed:15059963 and PubMed:15361857, but is not observed by PubMed:19648179. The large PER complex involved in the repression of transcriptional termination is composed of at least PER2, CDK9, DDX5, DHX9, NCBP1/CBP80 and POLR2A. Component of an alternative nuclear cap-binding complex (CBC) composed of NCBP1/CBP80 and NCBP3. Interacts with METTL3. Interacts with ZFC3H1 in a RNase-insensitive manner. Interacts with MTREX. Interacts with TASOR. Interacts with DHX34; the interaction is RNA-dependent. Interacts with KPNA3. In terms of processing, dephosphorylated at Thr-21 by the PNUTS-PP1 complex during RNA polymerase II transcription pause-release.

It is found in the nucleus. It localises to the cytoplasm. In terms of biological role, component of the cap-binding complex (CBC), which binds cotranscriptionally to the 5'-cap of pre-mRNAs and is involved in various processes such as pre-mRNA splicing, translation regulation, nonsense-mediated mRNA decay, RNA-mediated gene silencing (RNAi) by microRNAs (miRNAs) and mRNA export. The CBC complex is involved in mRNA export from the nucleus via its interaction with ALYREF/THOC4/ALY, leading to the recruitment of the mRNA export machinery to the 5'-end of mRNA and to mRNA export in a 5' to 3' direction through the nuclear pore. The CBC complex is also involved in mediating U snRNA and intronless mRNAs export from the nucleus. The CBC complex is essential for a pioneer round of mRNA translation, before steady state translation when the CBC complex is replaced by cytoplasmic cap-binding protein eIF4E. The pioneer round of mRNA translation mediated by the CBC complex plays a central role in nonsense-mediated mRNA decay (NMD), NMD only taking place in mRNAs bound to the CBC complex, but not on eIF4E-bound mRNAs. The CBC complex enhances NMD in mRNAs containing at least one exon-junction complex (EJC) via its interaction with UPF1, promoting the interaction between UPF1 and UPF2. The CBC complex is also involved in 'failsafe' NMD, which is independent of the EJC complex, while it does not participate in Staufen-mediated mRNA decay (SMD). During cell proliferation, the CBC complex is also involved in microRNAs (miRNAs) biogenesis via its interaction with SRRT/ARS2 and is required for miRNA-mediated RNA interference. The CBC complex also acts as a negative regulator of PARN, thereby acting as an inhibitor of mRNA deadenylation. In the CBC complex, NCBP1/CBP80 does not bind directly capped RNAs (m7GpppG-capped RNA) but is required to stabilize the movement of the N-terminal loop of NCBP2/CBP20 and lock the CBC into a high affinity cap-binding state with the cap structure. Associates with NCBP3 to form an alternative cap-binding complex (CBC) which plays a key role in mRNA export and is particularly important in cellular stress situations such as virus infections. The conventional CBC with NCBP2 binds both small nuclear RNA (snRNA) and messenger (mRNA) and is involved in their export from the nucleus whereas the alternative CBC with NCBP3 does not bind snRNA and associates only with mRNA thereby playing a role only in mRNA export. NCBP1/CBP80 is required for cell growth and viability. The chain is Nuclear cap-binding protein subunit 1 (NCBP1) from Homo sapiens (Human).